The sequence spans 329 residues: Ribosomal RNA small subunit methyltransferase H (329 aa).

S-adenosyl-L-methionine is bound by residues 34–36 (GGH), D59, F86, D112, and Q119.

Belongs to the methyltransferase superfamily. RsmH family.

The protein resides in the cytoplasm. It catalyses the reaction cytidine(1402) in 16S rRNA + S-adenosyl-L-methionine = N(4)-methylcytidine(1402) in 16S rRNA + S-adenosyl-L-homocysteine + H(+). Specifically methylates the N4 position of cytidine in position 1402 (C1402) of 16S rRNA. This Chlorobium phaeobacteroides (strain DSM 266 / SMG 266 / 2430) protein is Ribosomal RNA small subunit methyltransferase H.